A 193-amino-acid chain; its full sequence is Hypoxanthine/guanine phosphoribosyltransferase (193 aa).

The protein belongs to the purine/pyrimidine phosphoribosyltransferase family. Archaeal HPRT subfamily. In terms of assembly, homodimer.

The protein localises to the cytoplasm. The catalysed reaction is IMP + diphosphate = hypoxanthine + 5-phospho-alpha-D-ribose 1-diphosphate. The enzyme catalyses GMP + diphosphate = guanine + 5-phospho-alpha-D-ribose 1-diphosphate. It functions in the pathway purine metabolism; IMP biosynthesis via salvage pathway; IMP from hypoxanthine: step 1/1. In terms of biological role, catalyzes a salvage reaction resulting in the formation of IMP that is energically less costly than de novo synthesis. Prefers hypoxanthine, has 66% activity with guanine while activity with adenine, xanthine, uracil, orotate, or cytosine is negligible. In Methanothermobacter marburgensis (strain ATCC BAA-927 / DSM 2133 / JCM 14651 / NBRC 100331 / OCM 82 / Marburg) (Methanobacterium thermoautotrophicum), this protein is Hypoxanthine/guanine phosphoribosyltransferase.